We begin with the raw amino-acid sequence, 343 residues long: N-acetyl-gamma-glutamyl-phosphate reductase (343 aa).

Residue Cys-149 is part of the active site.

This sequence belongs to the NAGSA dehydrogenase family. Type 1 subfamily.

The protein resides in the cytoplasm. The catalysed reaction is N-acetyl-L-glutamate 5-semialdehyde + phosphate + NADP(+) = N-acetyl-L-glutamyl 5-phosphate + NADPH + H(+). The protein operates within amino-acid biosynthesis; L-arginine biosynthesis; N(2)-acetyl-L-ornithine from L-glutamate: step 3/4. In terms of biological role, catalyzes the NADPH-dependent reduction of N-acetyl-5-glutamyl phosphate to yield N-acetyl-L-glutamate 5-semialdehyde. The protein is N-acetyl-gamma-glutamyl-phosphate reductase of Alkalilimnicola ehrlichii (strain ATCC BAA-1101 / DSM 17681 / MLHE-1).